We begin with the raw amino-acid sequence, 261 residues long: Type III pantothenate kinase (261 aa).

ATP is bound at residue 6 to 13 (DVGNTNTV). 107 to 110 (GADR) serves as a coordination point for substrate. The Proton acceptor role is filled by D109. Residue D129 coordinates K(+). T132 is a binding site for ATP. T183 lines the substrate pocket.

It belongs to the type III pantothenate kinase family. In terms of assembly, homodimer. NH4(+) serves as cofactor. Requires K(+) as cofactor.

The protein resides in the cytoplasm. The enzyme catalyses (R)-pantothenate + ATP = (R)-4'-phosphopantothenate + ADP + H(+). It participates in cofactor biosynthesis; coenzyme A biosynthesis; CoA from (R)-pantothenate: step 1/5. Its function is as follows. Catalyzes the phosphorylation of pantothenate (Pan), the first step in CoA biosynthesis. This chain is Type III pantothenate kinase, found in Kosmotoga olearia (strain ATCC BAA-1733 / DSM 21960 / TBF 19.5.1).